The primary structure comprises 803 residues: Myb-like protein V (803 aa).

Disordered regions lie at residues 237 to 333 and 429 to 803; these read SNIY…LPGL and KSTS…SRRK. Positions 258–323 form a coiled coil; sequence DANDKNENNN…ENNKNKRTKS (66 aa). Positions 271-294 are enriched in acidic residues; the sequence is DDADDAAADDADDADDDDMDDESD. A compositionally biased stretch (low complexity) spans 295-315; it reads SNNNNKNSNNKNSNNKNSNEN. Residues 332-379 form the Myb-like domain; it reads GLWTDEECRSLIKAVMIIGHRWIKIKEDYYSTSKRKPSQLKDKMRSLR. Coiled coils occupy residues 400–429 and 463–496; these read EIEKLAVLFQQKEEAQKLAKEKIDSLSNIK and NNEDNQNESESENEDENDNNEKEKEKRNKKNSAV. The span at 429 to 438 shows a compositional bias: polar residues; the sequence is KSTSNTSAAS. Acidic residues-rich tracts occupy residues 448–480 and 510–533; these read NDSDEEVDQDSDNDSNNEDNQNESESENEDEND and EEEESDEEHNDSEEDSQEDSEENE. 2 stretches are compositionally biased toward basic residues: residues 537–553 and 568–577; these read KQKRKSNQIKSSPKKLK and HKSKLKSKPQ. A coiled-coil region spans residues 573 to 616; the sequence is KSKPQRKVEKEESEKEESEEEESEEEEEEDDEDYESEEDKKKKK. Positions 586 to 609 are enriched in acidic residues; the sequence is EKEESEEEESEEEEEEDDEDYESE. 2 stretches are compositionally biased toward low complexity: residues 625-636 and 666-733; these read TSTHTTTTTTTT and KKSN…PTKK. The span at 786–795 shows a compositional bias: basic and acidic residues; that stretch reads LNKDSKENKK.

This Dictyostelium discoideum (Social amoeba) protein is Myb-like protein V (mybV).